The sequence spans 298 residues: GTP cyclohydrolase FolE2 (298 aa).

Belongs to the GTP cyclohydrolase IV family.

The catalysed reaction is GTP + H2O = 7,8-dihydroneopterin 3'-triphosphate + formate + H(+). It participates in cofactor biosynthesis; 7,8-dihydroneopterin triphosphate biosynthesis; 7,8-dihydroneopterin triphosphate from GTP: step 1/1. In terms of biological role, converts GTP to 7,8-dihydroneopterin triphosphate. The sequence is that of GTP cyclohydrolase FolE2 from Pseudomonas aeruginosa (strain LESB58).